Here is a 302-residue protein sequence, read N- to C-terminus: Phosphoribosylaminoimidazole-succinocarboxamide synthase (302 aa).

It belongs to the SAICAR synthetase family.

It carries out the reaction 5-amino-1-(5-phospho-D-ribosyl)imidazole-4-carboxylate + L-aspartate + ATP = (2S)-2-[5-amino-1-(5-phospho-beta-D-ribosyl)imidazole-4-carboxamido]succinate + ADP + phosphate + 2 H(+). Its pathway is purine metabolism; IMP biosynthesis via de novo pathway; 5-amino-1-(5-phospho-D-ribosyl)imidazole-4-carboxamide from 5-amino-1-(5-phospho-D-ribosyl)imidazole-4-carboxylate: step 1/2. The chain is Phosphoribosylaminoimidazole-succinocarboxamide synthase from Polaromonas sp. (strain JS666 / ATCC BAA-500).